We begin with the raw amino-acid sequence, 86 residues long: Small ribosomal subunit protein uS15 (86 aa).

Residues 1-10 (MSIDTQSIIE) show a composition bias toward polar residues. The tract at residues 1 to 21 (MSIDTQSIIENNKRSAHDTGS) is disordered.

This sequence belongs to the universal ribosomal protein uS15 family. As to quaternary structure, part of the 30S ribosomal subunit. Forms a bridge to the 50S subunit in the 70S ribosome, contacting the 23S rRNA.

Functionally, one of the primary rRNA binding proteins, it binds directly to 16S rRNA where it helps nucleate assembly of the platform of the 30S subunit by binding and bridging several RNA helices of the 16S rRNA. Its function is as follows. Forms an intersubunit bridge (bridge B4) with the 23S rRNA of the 50S subunit in the ribosome. In Xylella fastidiosa (strain 9a5c), this protein is Small ribosomal subunit protein uS15.